Reading from the N-terminus, the 196-residue chain is CASP-like protein 1D1 (196 aa).

The segment covering 1-18 has biased composition (basic and acidic residues); sequence MASTDKPDRESIKSEEAP. A disordered region spans residues 1–22; sequence MASTDKPDRESIKSEEAPAAHP. Residues 1-29 lie on the Cytoplasmic side of the membrane; sequence MASTDKPDRESIKSEEAPAAHPRRSNYSS. A helical transmembrane segment spans residues 30–50; sequence VHVALRFLLFAASVTAVVVMV. Residues 51–84 are Extracellular-facing; it reads TAKQTKIVPVPGLPISVPLEAKFSDSPAFLYFIS. A helical membrane pass occupies residues 85 to 105; the sequence is ALSVAGLYGILTTLAAISIVL. Topologically, residues 106–112 are cytoplasmic; the sequence is KPAYATR. A helical transmembrane segment spans residues 113–133; that stretch reads FLLHFALLDVLMLGIVASATG. Topologically, residues 134 to 167 are extracellular; the sequence is AAGGVAYVGLKGNSHVRWGKVCNVYDKFCQHVGS. Residues 168–188 traverse the membrane as a helical segment; it reads SIAVALFASVLLVLLTMLSVF. Over 189–196 the chain is Cytoplasmic; sequence SIYRKIPK.

It belongs to the Casparian strip membrane proteins (CASP) family. As to quaternary structure, homodimer and heterodimers.

The protein resides in the cell membrane. This is CASP-like protein 1D1 from Populus trichocarpa (Western balsam poplar).